We begin with the raw amino-acid sequence, 179 residues long: Probable phosphopantothenoylcysteine decarboxylase (179 aa).

Residue N124 participates in substrate binding. C157 serves as the catalytic Proton donor.

The protein belongs to the HFCD (homooligomeric flavin containing Cys decarboxylase) superfamily. FMN serves as cofactor.

The enzyme catalyses N-[(R)-4-phosphopantothenoyl]-L-cysteine + H(+) = (R)-4'-phosphopantetheine + CO2. The protein operates within cofactor biosynthesis; coenzyme A biosynthesis; CoA from (R)-pantothenate: step 3/5. Functionally, catalyzes the decarboxylation of 4'-phosphopantothenoylcysteine to 4'-phosphopantetheine. This chain is Probable phosphopantothenoylcysteine decarboxylase (coaC), found in Streptococcus mutans serotype c (strain ATCC 700610 / UA159).